A 124-amino-acid polypeptide reads, in one-letter code: Orexigenic neuropeptide QRFP (124 aa).

Positions 1-17 (MRCLCSWLCLLLPLSAC) are cleaved as a signal peptide. Positions 18–79 (FPLLDRRGPT…REHTGFRLGR (62 aa)) are excised as a propeptide. The interval 63 to 100 (KEQQASRREHTGFRLGRQDSGSEATGFLPTDSEKASGP) is disordered. Glutamine 80 is subject to Pyrrolidone carboxylic acid. Residue phenylalanine 122 is modified to Phenylalanine amide.

It belongs to the RFamide neuropeptide family. In terms of assembly, ligand for the G-protein coupled receptor QRFPR/GPR103. In terms of tissue distribution, expressed in the brain with highest expression levels in the hypothalamus and optic nerve. Also expressed in the trachea and mammary gland.

It is found in the secreted. Its function is as follows. Stimulates feeding and grooming behavior, metabolic rate and locomotor activity and increases blood pressure. May have orexigenic activity. May promote aldosterone secretion by the adrenal gland. The chain is Orexigenic neuropeptide QRFP (Qrfp) from Rattus norvegicus (Rat).